A 330-amino-acid polypeptide reads, in one-letter code: MQTNLLKPKTINVEQLGANRAKVTLEPFERGYGHTLGNALRRVLLSSMVGHAATEVTIAGVLHEYSSIDGVQEDVVNILLNLKGVVFKLHNRDEVTLSLRKDGEGPITAADIQTPHDVEIVNPDHVIMNLSHGGKIDMQIKVENGRGYVPGNVRRYGDESPKSIGRIVLDASFSPVKRVSYTVESARVEQRTDLDKLVLEIETNGAVTAEDAVRASAKILVEQLAVFAQLEGNELGAIINDPAPRSSQQFDPILLRPVDELELTVRSANCLKAENIYYIGDLIQRTENELLKTPNLGRKSLNEIKEVLASRGLTLGMRLESWPPAGLDKR.

The interval Met-1–Glu-231 is alpha N-terminal domain (alpha-NTD). Residues Phe-250–Arg-330 are alpha C-terminal domain (alpha-CTD).

The protein belongs to the RNA polymerase alpha chain family. In terms of assembly, homodimer. The RNAP catalytic core consists of 2 alpha, 1 beta, 1 beta' and 1 omega subunit. When a sigma factor is associated with the core the holoenzyme is formed, which can initiate transcription.

The catalysed reaction is RNA(n) + a ribonucleoside 5'-triphosphate = RNA(n+1) + diphosphate. Its function is as follows. DNA-dependent RNA polymerase catalyzes the transcription of DNA into RNA using the four ribonucleoside triphosphates as substrates. This Polaromonas naphthalenivorans (strain CJ2) protein is DNA-directed RNA polymerase subunit alpha.